The chain runs to 102 residues: Small ribosomal subunit protein uS10 (102 aa).

This sequence belongs to the universal ribosomal protein uS10 family. In terms of assembly, part of the 30S ribosomal subunit.

Its function is as follows. Involved in the binding of tRNA to the ribosomes. The protein is Small ribosomal subunit protein uS10 of Geobacillus kaustophilus (strain HTA426).